The primary structure comprises 505 residues: ATP synthase subunit alpha, chloroplastic (505 aa).

Residue glycine 170–threonine 177 coordinates ATP.

This sequence belongs to the ATPase alpha/beta chains family. F-type ATPases have 2 components, CF(1) - the catalytic core - and CF(0) - the membrane proton channel. CF(1) has five subunits: alpha(3), beta(3), gamma(1), delta(1), epsilon(1). CF(0) has four main subunits: a, b, b' and c.

The protein localises to the plastid. It localises to the chloroplast thylakoid membrane. The enzyme catalyses ATP + H2O + 4 H(+)(in) = ADP + phosphate + 5 H(+)(out). Produces ATP from ADP in the presence of a proton gradient across the membrane. The alpha chain is a regulatory subunit. This chain is ATP synthase subunit alpha, chloroplastic, found in Phaeodactylum tricornutum (strain CCAP 1055/1).